We begin with the raw amino-acid sequence, 382 residues long: Homeobox protein bagpipe (382 aa).

3 disordered regions span residues 27 to 66 (NDIL…SKSP), 144 to 178 (TSND…KKRS), and 314 to 382 (QPIP…VEID). Residues 48-62 (EPEKLKPSSDRERSI) are compositionally biased toward basic and acidic residues. Low complexity predominate over residues 158-170 (SSPSESPLSHDGS). Positions 175-234 (KKRSRAAFSHAQVFELERRFAQQRYLSGPERSEMAKSLRLTETQVKIWFQNRRYKTKRKQ) form a DNA-binding region, homeobox. Low complexity predominate over residues 321-335 (QSSSFVTASSASSSP). The segment covering 373-382 (EDVDENVEID) has biased composition (acidic residues).

Belongs to the NK-3 homeobox family. In terms of tissue distribution, is expressed in a segmented pattern in visceral muscle and in a subset of cardiac muscles. Loss of activity results in segmental gaps in midgut visceral muscle.

Its subcellular location is the nucleus. Functionally, involved in the determination of cell fates in the dorsal mesoderm. The protein is Homeobox protein bagpipe (bap) of Drosophila melanogaster (Fruit fly).